We begin with the raw amino-acid sequence, 345 residues long: MNIMRTAMLLAFMTALFMGVGYLVGGSNGMVIALLMAGGLNFFSYWNSDKIVLRMYGAREVDQHSSPVYYKIVSDLARRASLPQPKVYIIDNAQPNAFATGRNPQNAAVAASTGLLNQLSAEEVAGVMAHELAHIEHRDTLTMTLTATIAGAISMLGNFAFFMGGQRHSSENSHSTGAIGGLLALFVAPFAAMLVQMAISRTREYAADRRGAEICGNPLWLASALSKIAGGGHTVYNEEAEHNPATAHMFIINPLRGEGADSLFSTHPATANRIAALRRQAEEMKGARVENMGWNEKIGLHKKSSDFRDLNSGAQTSVFNEESTVQRIKKRPSWLRYGDSKRPRS.

The next 2 membrane-spanning stretches (helical) occupy residues 6-26 and 27-47; these read TAML…LVGG and SNGM…SYWN. H130 is a binding site for Zn(2+). E131 is a catalytic residue. H134 contacts Zn(2+). 2 consecutive transmembrane segments (helical) span residues 145-165 and 179-199; these read LTAT…FMGG and IGGL…QMAI. E204 serves as a coordination point for Zn(2+).

Belongs to the peptidase M48B family. Zn(2+) serves as cofactor.

It localises to the cell inner membrane. The polypeptide is Protease HtpX homolog (Bartonella henselae (strain ATCC 49882 / DSM 28221 / CCUG 30454 / Houston 1) (Rochalimaea henselae)).